Here is a 227-residue protein sequence, read N- to C-terminus: MADS-box transcription factor 25 (227 aa).

The MADS-box domain occupies 1–61 (MGRGKIAIKR…GRLYDFSSSS (61 aa)). The K-box domain maps to 86–176 (AKFWQREVTT…RKKFNIAHQR (91 aa)). Residues 183–227 (KLNSGESTSSEQVTRSSKDPGESSTPRDSRVCIDLELSQKEVEDE) are disordered. Positions 186-197 (SGESTSSEQVTR) are enriched in polar residues. Residues 198–227 (SSKDPGESSTPRDSRVCIDLELSQKEVEDE) are compositionally biased toward basic and acidic residues.

As to expression, expressed in seedling roots.

It is found in the nucleus. Its function is as follows. Probable transcription factor. The protein is MADS-box transcription factor 25 (MADS25) of Oryza sativa subsp. japonica (Rice).